The following is a 441-amino-acid chain: Chromosomal replication initiator protein DnaA (441 aa).

The segment at 1–71 (MDIRWEEILE…AVYQVVGDRF (71 aa)) is domain I, interacts with DnaA modulators. The segment at 71–99 (FKVSILTESETSSHVLKEVIQSKFDDSDS) is domain II. The domain III, AAA+ region stretch occupies residues 100 to 318 (DLNPEYIFSN…GIVNDLVMYK (219 aa)). ATP contacts are provided by glycine 143, glycine 145, lysine 146, and threonine 147. The segment at 319-441 (KAYEYFLLTE…HTIKHKISFQ (123 aa)) is domain IV, binds dsDNA.

This sequence belongs to the DnaA family. In terms of assembly, oligomerizes as a right-handed, spiral filament on DNA at oriC.

It localises to the cytoplasm. Its function is as follows. Plays an essential role in the initiation and regulation of chromosomal replication. ATP-DnaA binds to the origin of replication (oriC) to initiate formation of the DNA replication initiation complex once per cell cycle. Binds the DnaA box (a 9 base pair repeat at the origin) and separates the double-stranded (ds)DNA. Forms a right-handed helical filament on oriC DNA; dsDNA binds to the exterior of the filament while single-stranded (ss)DNA is stabiized in the filament's interior. The ATP-DnaA-oriC complex binds and stabilizes one strand of the AT-rich DNA unwinding element (DUE), permitting loading of DNA polymerase. After initiation quickly degrades to an ADP-DnaA complex that is not apt for DNA replication. Binds acidic phospholipids. In Leptospira biflexa serovar Patoc (strain Patoc 1 / Ames), this protein is Chromosomal replication initiator protein DnaA.